A 385-amino-acid polypeptide reads, in one-letter code: 4-hydroxy-3-methylbut-2-en-1-yl diphosphate synthase (flavodoxin) 1 (385 aa).

[4Fe-4S] cluster-binding residues include Cys280, Cys283, Cys315, and Glu322.

The protein belongs to the IspG family. The cofactor is [4Fe-4S] cluster.

The enzyme catalyses (2E)-4-hydroxy-3-methylbut-2-enyl diphosphate + oxidized [flavodoxin] + H2O + 2 H(+) = 2-C-methyl-D-erythritol 2,4-cyclic diphosphate + reduced [flavodoxin]. It participates in isoprenoid biosynthesis; isopentenyl diphosphate biosynthesis via DXP pathway; isopentenyl diphosphate from 1-deoxy-D-xylulose 5-phosphate: step 5/6. Functionally, converts 2C-methyl-D-erythritol 2,4-cyclodiphosphate (ME-2,4cPP) into 1-hydroxy-2-methyl-2-(E)-butenyl 4-diphosphate. The protein is 4-hydroxy-3-methylbut-2-en-1-yl diphosphate synthase (flavodoxin) 1 of Streptomyces avermitilis (strain ATCC 31267 / DSM 46492 / JCM 5070 / NBRC 14893 / NCIMB 12804 / NRRL 8165 / MA-4680).